A 391-amino-acid chain; its full sequence is MRKLFTSESVTEGHPDKICDQISDAVLDAILERDPNGRVACETSVTTGMVLVTGEITTNCYVDIPKIVRNTIEAIGYTRAKYGFDSDTCAVLTSISEQSPDIAMGVDESLESKQGGMDKEDVIGAGDQGMMFGYANNETSEYMPMAISIAHKLSRRLSEVRKNGTLPYLRPDGKTQVTVEYEDNKAIRIDTIVVSTQHGPEVTREQIEKDIFEHVISKVVPVEFLDENTNYYINPTGRFVVGGPQGDAGLTGRKIIVDTYGGYGRHGGGAFSGKDPTKVDRSAAYAARWVAKNLVAAGVADKLEVQLAYAIGIAKPVSISVETFGTGKIDDRKIVEIINKVFDLRPSAIIKELNLRRPIYKQTAAYGHFGRTDVELPWESLNKLEEIKNLI.

His-14 serves as a coordination point for ATP. Asp-16 contacts Mg(2+). Glu-42 lines the K(+) pocket. Positions 55 and 98 each coordinate L-methionine. Positions 98–108 (QSPDIAMGVDE) are flexible loop. ATP contacts are provided by residues 172 to 174 (DGK), 238 to 239 (RF), Asp-247, 253 to 254 (RK), Ala-270, and Lys-274. L-methionine is bound at residue Asp-247. Position 278 (Lys-278) interacts with L-methionine.

Belongs to the AdoMet synthase family. Homotetramer; dimer of dimers. Mg(2+) is required as a cofactor. K(+) serves as cofactor.

It is found in the cytoplasm. It carries out the reaction L-methionine + ATP + H2O = S-adenosyl-L-methionine + phosphate + diphosphate. The protein operates within amino-acid biosynthesis; S-adenosyl-L-methionine biosynthesis; S-adenosyl-L-methionine from L-methionine: step 1/1. Functionally, catalyzes the formation of S-adenosylmethionine (AdoMet) from methionine and ATP. The overall synthetic reaction is composed of two sequential steps, AdoMet formation and the subsequent tripolyphosphate hydrolysis which occurs prior to release of AdoMet from the enzyme. The chain is S-adenosylmethionine synthase from Clostridium tetani (strain Massachusetts / E88).